A 347-amino-acid polypeptide reads, in one-letter code: D-fructose 1,6-bisphosphatase class 2/sedoheptulose 1,7-bisphosphatase (347 aa).

Residues D33, E57, D97, and E100 each coordinate Mn(2+). Residues 100 to 102 (EGT), Y131, 176 to 178 (RDR), and 198 to 200 (DGD) contribute to the substrate site. Position 225 (E225) interacts with Mn(2+).

The protein belongs to the FBPase class 2 family. As to quaternary structure, homotetramer. Mn(2+) is required as a cofactor.

The catalysed reaction is beta-D-fructose 1,6-bisphosphate + H2O = beta-D-fructose 6-phosphate + phosphate. The enzyme catalyses D-sedoheptulose 1,7-bisphosphate + H2O = D-sedoheptulose 7-phosphate + phosphate. Its pathway is carbohydrate biosynthesis; Calvin cycle. In terms of biological role, catalyzes the hydrolysis of fructose 1,6-bisphosphate (Fru 1,6-P2) and sedoheptulose 1,7-bisphosphate (Sed 1,7-P2) to fructose 6-phosphate and sedoheptulose 7-phosphate, respectively. The polypeptide is D-fructose 1,6-bisphosphatase class 2/sedoheptulose 1,7-bisphosphatase (Thermosynechococcus vestitus (strain NIES-2133 / IAM M-273 / BP-1)).